The sequence spans 162 residues: NADH-quinone oxidoreductase subunit I (162 aa).

4Fe-4S ferredoxin-type domains are found at residues 53–83 (LRRY…IEAE) and 93–122 (TRYD…EGPN). The [4Fe-4S] cluster site is built by C63, C66, C69, C73, C102, C105, C108, and C112.

Belongs to the complex I 23 kDa subunit family. As to quaternary structure, NDH-1 is composed of 14 different subunits. Subunits NuoA, H, J, K, L, M, N constitute the membrane sector of the complex. Requires [4Fe-4S] cluster as cofactor.

The protein localises to the cell inner membrane. It catalyses the reaction a quinone + NADH + 5 H(+)(in) = a quinol + NAD(+) + 4 H(+)(out). Functionally, NDH-1 shuttles electrons from NADH, via FMN and iron-sulfur (Fe-S) centers, to quinones in the respiratory chain. The immediate electron acceptor for the enzyme in this species is believed to be ubiquinone. Couples the redox reaction to proton translocation (for every two electrons transferred, four hydrogen ions are translocated across the cytoplasmic membrane), and thus conserves the redox energy in a proton gradient. This is NADH-quinone oxidoreductase subunit I from Rhodospirillum rubrum (strain ATCC 11170 / ATH 1.1.1 / DSM 467 / LMG 4362 / NCIMB 8255 / S1).